A 205-amino-acid chain; its full sequence is Spermatogenesis-associated protein 24 (205 aa).

Residues 17 to 166 (LALDQLRDVI…QQKQIFRNHM (150 aa)) adopt a coiled-coil conformation. Positions 138-185 (EDILNGKENEIKELQQVISQQKQIFRNHMSDFRIQKQQESYMAQVLDQ) are required for interaction with CBX5 and TBPL1. Positions 180 to 205 (AQVLDQKHKKASGTRQARSHQHPREK) are disordered. The span at 186 to 205 (KHKKASGTRQARSHQHPREK) shows a compositional bias: basic residues.

The protein belongs to the SPATA24 family. As to quaternary structure, homodimer. Interacts with CBX3, CBX5, GMNN, GTF2B, TBPL1 and the polycomb proteins PHCF2, RNF2 and SCMH1 but not with CBX1 or PCGF2.

It is found in the cytoplasm. The protein localises to the nucleus. The protein resides in the nucleolus. It localises to the nucleoplasm. In terms of biological role, binds DNA with high affinity but does not bind to TATA boxes. Synergises with GMNN and TBP in activation of TATA box-containing promoters and with GMNN and TBPL1 in activation of the NF1 TATA-less promoter. May play a role in cytoplasm movement and removal during spermiogenesis. This Homo sapiens (Human) protein is Spermatogenesis-associated protein 24 (SPATA24).